The primary structure comprises 354 residues: UDP-3-O-acylglucosamine N-acyltransferase (354 aa).

Residue His-245 is the Proton acceptor of the active site.

This sequence belongs to the transferase hexapeptide repeat family. LpxD subfamily. In terms of assembly, homotrimer.

The enzyme catalyses a UDP-3-O-[(3R)-3-hydroxyacyl]-alpha-D-glucosamine + a (3R)-hydroxyacyl-[ACP] = a UDP-2-N,3-O-bis[(3R)-3-hydroxyacyl]-alpha-D-glucosamine + holo-[ACP] + H(+). The protein operates within bacterial outer membrane biogenesis; LPS lipid A biosynthesis. Its function is as follows. Catalyzes the N-acylation of UDP-3-O-acylglucosamine using 3-hydroxyacyl-ACP as the acyl donor. Is involved in the biosynthesis of lipid A, a phosphorylated glycolipid that anchors the lipopolysaccharide to the outer membrane of the cell. This is UDP-3-O-acylglucosamine N-acyltransferase from Anaeromyxobacter sp. (strain K).